The primary structure comprises 843 residues: Beta-mannosidase B (843 aa).

Residue glutamate 432 is the Proton donor of the active site.

This sequence belongs to the glycosyl hydrolase 2 family. Beta-mannosidase B subfamily.

It catalyses the reaction Hydrolysis of terminal, non-reducing beta-D-mannose residues in beta-D-mannosides.. Its pathway is glycan metabolism; N-glycan degradation. Exoglycosidase that cleaves the single beta-linked mannose residue from the non-reducing end of beta-mannosidic oligosaccharides of various complexity and length. Prefers mannobiose over mannotriose and has no activity against polymeric mannan. Is also severely restricted by galactosyl substitutions at the +1 subsite. Releases the terminal mannose residue from mannobiose, mannotriose and galactosyl-mannotriose (GM3), but not from galactosyl-mannobiose (GM2) or di-galactosyl-mannopentaose (G2M5). This Emericella nidulans (strain FGSC A4 / ATCC 38163 / CBS 112.46 / NRRL 194 / M139) (Aspergillus nidulans) protein is Beta-mannosidase B (mndB).